A 179-amino-acid chain; its full sequence is Large ribosomal subunit protein bL19 (179 aa).

This sequence belongs to the bacterial ribosomal protein bL19 family.

Functionally, this protein is located at the 30S-50S ribosomal subunit interface and may play a role in the structure and function of the aminoacyl-tRNA binding site. This chain is Large ribosomal subunit protein bL19, found in Rhizobium johnstonii (strain DSM 114642 / LMG 32736 / 3841) (Rhizobium leguminosarum bv. viciae).